We begin with the raw amino-acid sequence, 884 residues long: Translation initiation factor IF-2 (884 aa).

Composition is skewed to basic and acidic residues over residues 110-153 and 193-234; these read AKAK…KEKA and KQKE…DHHV. The interval 110-291 is disordered; it reads AKAKAEADAK…NRSTAPQSMA (182 aa). Positions 255–268 are enriched in basic residues; it reads GRRARNKPTNKKRG. The 170-residue stretch at 384 to 553 folds into the tr-type G domain; it reads TRAPVVTIMG…LLQSEVLELK (170 aa). The interval 393 to 400 is G1; it reads GHVDHGKT. 393–400 contributes to the GTP binding site; the sequence is GHVDHGKT. The segment at 418–422 is G2; that stretch reads GITQH. The segment at 439–442 is G3; sequence DTPG. Residues 439–443 and 493–496 each bind GTP; these read DTPGH and NKMD. A G4 region spans residues 493 to 496; it reads NKMD. Positions 529 to 531 are G5; the sequence is SAK.

The protein belongs to the TRAFAC class translation factor GTPase superfamily. Classic translation factor GTPase family. IF-2 subfamily.

The protein localises to the cytoplasm. In terms of biological role, one of the essential components for the initiation of protein synthesis. Protects formylmethionyl-tRNA from spontaneous hydrolysis and promotes its binding to the 30S ribosomal subunits. Also involved in the hydrolysis of GTP during the formation of the 70S ribosomal complex. The sequence is that of Translation initiation factor IF-2 from Shewanella denitrificans (strain OS217 / ATCC BAA-1090 / DSM 15013).